The following is a 470-amino-acid chain: GTPase grn1 (470 aa).

The segment covering 1-16 (MVSLKKKSKRRTTRLR) has biased composition (basic residues). The interval 1–56 (MVSLKKKSKRRTTRLRSRIEKKAAESKRKQKRADKKNPQWKSRIPKDPGIPNSFPY) is disordered. Residues 17 to 27 (SRIEKKAAESK) show a composition bias toward basic and acidic residues. The CP-type G domain occupies 153-333 (DKEFKKVVEA…LVDSPGIVFP (181 aa)). Residues 202–205 (NKID), 276–283 (GYPNVGKS), and 326–329 (DSPG) each bind GTP. Residues 405–415 (ARKRGRLGRGG) are RNA-binding.

This sequence belongs to the TRAFAC class YlqF/YawG GTPase family.

It localises to the nucleus. The protein localises to the nucleolus. Required for optimal growth. Required for normal processing of ribosomal pre-rRNA. Required for nuclear export of ribosomal protein rpl2501. This is GTPase grn1 from Schizosaccharomyces pombe (strain 972 / ATCC 24843) (Fission yeast).